The following is a 108-amino-acid chain: Cuticle protein AM1199 (108 aa).

Q1 is subject to Pyrrolidone carboxylic acid. A Chitin-binding type R&amp;R domain is found at 26-91 (DGNFGYDFET…AESPLIPTPH (66 aa)). O-linked (HexNAc) threonine glycosylation occurs at T89.

Arthrodial membrane.

The sequence is that of Cuticle protein AM1199 from Cancer pagurus (Rock crab).